The sequence spans 452 residues: uncharacterized protein (452 aa).

It is found in the cytoplasm. Its subcellular location is the nucleus. This is an uncharacterized protein from Schizosaccharomyces pombe (strain 972 / ATCC 24843) (Fission yeast).